A 159-amino-acid chain; its full sequence is Ribosomal RNA large subunit methyltransferase H (159 aa).

Residues Leu-76, Gly-108, and Phe-127–Phe-132 each bind S-adenosyl-L-methionine.

This sequence belongs to the RNA methyltransferase RlmH family. Homodimer.

Its subcellular location is the cytoplasm. It catalyses the reaction pseudouridine(1915) in 23S rRNA + S-adenosyl-L-methionine = N(3)-methylpseudouridine(1915) in 23S rRNA + S-adenosyl-L-homocysteine + H(+). In terms of biological role, specifically methylates the pseudouridine at position 1915 (m3Psi1915) in 23S rRNA. The sequence is that of Ribosomal RNA large subunit methyltransferase H from Staphylococcus epidermidis (strain ATCC 35984 / DSM 28319 / BCRC 17069 / CCUG 31568 / BM 3577 / RP62A).